The primary structure comprises 146 residues: MGRFIFVSFGLLVVFLSLSGSGADWPSDWSSYDLYCYRVFQEKKNWEDAEKFCTQQHTDSHLVSFDSSEEADFVASKTFPVLNYDLVWIGLGSVWNACKLQWSDGTELKYNAWSAESECITSKSIDNQWFTRSCSQTYPFVCKFQA.

An N-terminal signal peptide occupies residues 1–23; the sequence is MGRFIFVSFGLLVVFLSLSGSGA. The C-type lectin domain maps to 32–143; sequence YDLYCYRVFQ…CSQTYPFVCK (112 aa). Disulfide bonds link Cys-53-Cys-142 and Cys-119-Cys-134.

Belongs to the snaclec family. Heteromultimer; disulfide-linked. In terms of tissue distribution, expressed by the venom gland.

It localises to the secreted. Its function is as follows. Interferes with one step of hemostasis (modulation of platelet aggregation, or coagulation cascade, for example). The chain is Snaclec stejaggregin-B subunit beta-2 from Trimeresurus stejnegeri (Chinese green tree viper).